A 245-amino-acid polypeptide reads, in one-letter code: MFKAAINAELLKDAVAALAVIVDEVRFKINPEGISVKAVDPANVAMGIFELGSSAFDEYNADECEIGVDLNKITDLLGIADKNDTVRMELEEENHKLLIDVGGLSYTLSLLDPSTIRAEPRVPQLELPAKVVLNGADLRRAVKAAEKISDHMLMGVSDDTFYMEAKGDTDQVRLEMGRDQLIDLKAGEACSLFSLDYLTDIVKPTNKVNEVTLSLGKDFPILIDFEIANGSGRISYLLAPRIESD.

It belongs to the PCNA family. In terms of assembly, homotrimer. The subunits circularize to form a toroid; DNA passes through its center. Replication factor C (RFC) is required to load the toroid on the DNA.

Functionally, sliding clamp subunit that acts as a moving platform for DNA processing. Responsible for tethering the catalytic subunit of DNA polymerase and other proteins to DNA during high-speed replication. The sequence is that of DNA polymerase sliding clamp from Methanosarcina barkeri (strain Fusaro / DSM 804).